The primary structure comprises 628 residues: Voltage-gated potassium channel KCNC4 (628 aa).

Disordered stretches follow at residues 1–24 (MISSVCVSSYRGRKSGNKPPSKTC) and 62–88 (LAWLADPDGGGRPESDGGGAGSSGSSG). The tract at residues 1 to 28 (MISSVCVSSYRGRKSGNKPPSKTCLKEE) is inactivation gate. At 1–230 (MISSVCVSSY…EDPYSSRAAR (230 aa)) the chain is on the cytoplasmic side. Phosphoserine occurs at positions 8, 9, 15, and 21. Gly residues predominate over residues 77-88 (DGGGAGSSGSSG). Positions 120, 126, 147, and 148 each coordinate Zn(2+). A helical transmembrane segment spans residues 231–251 (VVAFASLFFILVSITTFCLET). N-linked (GlcNAc...) asparagine glycans are attached at residues Asn-260 and Asn-269. A helical transmembrane segment spans residues 282 to 302 (EPILTYIEGVCVMWFTLEFLV). Topologically, residues 303–316 (RIVCCPDTLDFVKN) are cytoplasmic. A helical membrane pass occupies residues 317-337 (LLNIIDFVAILPFYLEVGLSG). The helical; Voltage-sensor transmembrane segment at 349–368 (FLRVVRFVRILRIFKLTRHF) threads the bilayer. At 369-384 (VGLRVLGHTLRASTNE) the chain is on the cytoplasmic side. A helical membrane pass occupies residues 385–405 (FLLLIIFLALGVLIFATMIYY). K(+) is bound by residues Thr-440, Leu-441, Gly-442, and Tyr-443. A Selectivity filter motif is present at residues 440 to 445 (TLGYGD). A helical membrane pass occupies residues 456–476 (VGALCALAGVLTIAMPVPVIV). Residues 477 to 628 (NNFGMYYSLA…CVPVSHTCAL (152 aa)) are Cytoplasmic-facing. The tract at residues 493-584 (PKKRKKHVPR…RRALRRSGTR (92 aa)) is disordered. A compositionally biased stretch (basic and acidic residues) spans 531–546 (AREEGVVERKRADSKQ).

Belongs to the potassium channel family. C (Shaw) (TC 1.A.1.2) subfamily. Kv3.4/KCNC4 sub-subfamily. In terms of assembly, homotetramer. Heterotetramer of potassium channel proteins. In terms of processing, phosphorylation of serine residues in the inactivation gate inhibits rapid channel closure.

Its subcellular location is the membrane. It carries out the reaction K(+)(in) = K(+)(out). In terms of biological role, voltage-gated potassium channel that opens in response to the voltage difference across the membrane, forming a potassium-selective channel through which potassium ions pass in accordance with their electrochemical gradient. The channel displays rapid activation and inactivation kinetics. In Mus musculus (Mouse), this protein is Voltage-gated potassium channel KCNC4.